Reading from the N-terminus, the 825-residue chain is AMP deaminase 2 (825 aa).

The disordered stretch occupies residues 1 to 49 (MASYPSGSGKPKAKYPFKKRASLQASTAAPEARGGLGAPPLQSARSLPG). Residues 11-21 (PKAKYPFKKRA) are compositionally biased toward basic residues. A Phosphoserine modification is found at serine 22. Omega-N-methylarginine is present on arginine 45. Phosphoserine occurs at positions 46, 64, and 80. The residue at position 91 (tyrosine 91) is a Phosphotyrosine. Phosphoserine is present on residues serine 97 and serine 114. Threonine 134 carries the post-translational modification Phosphothreonine. Phosphoserine occurs at positions 136 and 138. Zn(2+) contacts are provided by histidine 364 and histidine 366. Substrate contacts are provided by residues histidine 366 and 435 to 440 (KFNAKY). Histidine 633 is a Zn(2+) binding site. Residue glutamate 636 coordinates substrate. The active-site Proton acceptor is the histidine 655. Position 710 (aspartate 710) interacts with Zn(2+). 711–714 (DPLQ) is a binding site for substrate.

Belongs to the metallo-dependent hydrolases superfamily. Adenosine and AMP deaminases family. As to quaternary structure, homotetramer. The cofactor is Zn(2+). As to expression, highly expressed in cerebellum.

The catalysed reaction is AMP + H2O + H(+) = IMP + NH4(+). It functions in the pathway purine metabolism; IMP biosynthesis via salvage pathway; IMP from AMP: step 1/1. AMP deaminase plays a critical role in energy metabolism. Catalyzes the deamination of AMP to IMP and plays an important role in the purine nucleotide cycle. This chain is AMP deaminase 2, found in Homo sapiens (Human).